Reading from the N-terminus, the 687-residue chain is Epithelial splicing regulatory protein 1 (687 aa).

RRM domains lie at 226–303, 327–407, and 446–526; these read TIIR…KATG, VIVR…RSTA, and DCIR…QCSA.

It belongs to the ESRP family.

The protein localises to the nucleus. Functionally, mRNA splicing factor that regulates the formation of epithelial cell-specific isoforms. Specifically regulates the expression of FGFR2-IIIb, an epithelial cell-specific isoform of fgfr2. Acts by directly binding specific sequences in mRNAs. Binds the GU-rich sequence motifs in the ISE/ISS-3, a cis-element regulatory region present in the mRNA of fgfr2. This chain is Epithelial splicing regulatory protein 1 (esrp1), found in Xenopus tropicalis (Western clawed frog).